We begin with the raw amino-acid sequence, 225 residues long: Small ribosomal subunit protein uS3 (225 aa).

In terms of domain architecture, KH type-2 spans 38–106 (IRKFVQNRFN…PVNLNIIEVK (69 aa)).

This sequence belongs to the universal ribosomal protein uS3 family. Part of the 30S ribosomal subunit. Forms a tight complex with proteins S10 and S14.

Functionally, binds the lower part of the 30S subunit head. Binds mRNA in the 70S ribosome, positioning it for translation. The polypeptide is Small ribosomal subunit protein uS3 (Leptospira interrogans serogroup Icterohaemorrhagiae serovar copenhageni (strain Fiocruz L1-130)).